The sequence spans 341 residues: Cysteine-rich with EGF-like domain protein 2 (341 aa).

Residues 1 to 24 (MLLSCSIFRLFCIILLLQLGSIYT) form the signal peptide. In terms of domain architecture, EGF-like spans 136–178 (DCNTCIGGADRPCHGNGKCDGDGTRAGNGKCSCDEGYDGEFCL). Disulfide bonds link Cys140–Cys154, Cys148–Cys166, and Cys168–Cys177. The N-linked (GlcNAc...) asparagine glycan is linked to Asn190. 2 FU repeats span residues 193-248 (FFLC…DQYC) and 254-308 (SFSC…NQHC). The 27-residue stretch at 291–317 (DIDECTEDPASCSDNQHCLNTDGSFSC) folds into the EGF-like 2; calcium-binding; truncated domain.

The protein belongs to the CRELD family.

Its subcellular location is the secreted. The protein localises to the endoplasmic reticulum. Functionally, possible role in neuronal acetylcholine receptor transport. In Danio rerio (Zebrafish), this protein is Cysteine-rich with EGF-like domain protein 2 (creld2).